The chain runs to 55 residues: Large ribosomal subunit protein bL32 (55 aa).

Positions 1 to 27 (MAVQQNKPTRSKRGMRRSHDALTTATL) are disordered.

This sequence belongs to the bacterial ribosomal protein bL32 family.

The polypeptide is Large ribosomal subunit protein bL32 (Yersinia enterocolitica serotype O:8 / biotype 1B (strain NCTC 13174 / 8081)).